Consider the following 125-residue polypeptide: Large-conductance mechanosensitive channel (125 aa).

The next 2 helical transmembrane spans lie at 15 to 35 and 67 to 87; these read MDLA…NSLV and GSFL…FFLI.

It belongs to the MscL family. As to quaternary structure, homopentamer.

The protein resides in the cell membrane. In terms of biological role, channel that opens in response to stretch forces in the membrane lipid bilayer. May participate in the regulation of osmotic pressure changes within the cell. In Lactobacillus gasseri (strain ATCC 33323 / DSM 20243 / BCRC 14619 / CIP 102991 / JCM 1131 / KCTC 3163 / NCIMB 11718 / NCTC 13722 / AM63), this protein is Large-conductance mechanosensitive channel.